The primary structure comprises 131 residues: UPF0102 protein YraN (131 aa).

The protein belongs to the UPF0102 family.

This Salmonella agona (strain SL483) protein is UPF0102 protein YraN.